The following is a 65-amino-acid chain: Large ribosomal subunit protein uL29 (65 aa).

It belongs to the universal ribosomal protein uL29 family.

This chain is Large ribosomal subunit protein uL29, found in Lactobacillus delbrueckii subsp. bulgaricus (strain ATCC 11842 / DSM 20081 / BCRC 10696 / JCM 1002 / NBRC 13953 / NCIMB 11778 / NCTC 12712 / WDCM 00102 / Lb 14).